The sequence spans 546 residues: Phosphomethylpyrimidine synthase (546 aa).

Substrate is bound by residues N145, M174, Y203, H239, 259–261 (SRG), 300–303 (DGLR), and E339. H343 contributes to the Zn(2+) binding site. Y366 serves as a coordination point for substrate. H407 provides a ligand contact to Zn(2+). Residues C487, C490, and C495 each contribute to the [4Fe-4S] cluster site.

This sequence belongs to the ThiC family. [4Fe-4S] cluster is required as a cofactor.

It carries out the reaction 5-amino-1-(5-phospho-beta-D-ribosyl)imidazole + S-adenosyl-L-methionine = 4-amino-2-methyl-5-(phosphooxymethyl)pyrimidine + CO + 5'-deoxyadenosine + formate + L-methionine + 3 H(+). The protein operates within cofactor biosynthesis; thiamine diphosphate biosynthesis. Catalyzes the synthesis of the hydroxymethylpyrimidine phosphate (HMP-P) moiety of thiamine from aminoimidazole ribotide (AIR) in a radical S-adenosyl-L-methionine (SAM)-dependent reaction. The chain is Phosphomethylpyrimidine synthase from Mycobacterium marinum (strain ATCC BAA-535 / M).